The following is a 560-amino-acid chain: Digoxin reductase (560 aa).

The tat-type signal signal peptide spans 1 to 48 (MEYGKCRGIERGMGRRDFLKAATLLGATAAGAGMLAGCAPKSASEAQA).

It belongs to the FAD-dependent oxidoreductase 2 family. In terms of assembly, may form a membrane-associated complex with Cgr1. It depends on FAD as a cofactor. Requires [4Fe-4S] cluster as cofactor. In terms of processing, predicted to be exported by the Tat system. The position of the signal peptide cleavage has not been experimentally proven.

The protein localises to the cell membrane. The enzyme catalyses digoxin + 2 Fe(II)-[cytochrome c] + 3 H(+) = dihydrodigoxin + 2 Fe(III)-[cytochrome c]. The catalysed reaction is digitoxin + 2 Fe(II)-[cytochrome c] + 3 H(+) = dihydrodigitoxin + 2 Fe(III)-[cytochrome c]. It carries out the reaction digoxigenin + 2 Fe(II)-[cytochrome c] + 3 H(+) = dihydrodigoxigenin + 2 Fe(III)-[cytochrome c]. It catalyses the reaction ouabain + 2 Fe(II)-[cytochrome c] + 3 H(+) = dihydroouabain + 2 Fe(III)-[cytochrome c]. The enzyme catalyses ouabagenin + 2 Fe(II)-[cytochrome c] + 3 H(+) = dihydroouabagenin + 2 Fe(III)-[cytochrome c]. In terms of biological role, involved in the inactivation of the cardiac medication and plant natural product digoxin, thus decreasing drug efficacy and toxicity. Catalyzes the reduction of the alpha,beta-unsaturated butyrolactone ring of digoxin to the inactive metabolite dihydrodigoxin. Likely uses the cytochrome Cgr1 as the physiological electron donor, encoded by the adjacent gene in the locus. Only reduces digoxin and other cardenolide toxins, such as digitoxin, digoxigenin, ouabain and ouabagenin. Therefore is a specialized enzyme present in some gut bacteria E.lenta that protects their human host against ingested plant toxins. In Eggerthella lenta (strain ATCC 25559 / DSM 2243 / CCUG 17323 / JCM 9979 / KCTC 3265 / NCTC 11813 / VPI 0255 / 1899 B) (Eubacterium lentum), this protein is Digoxin reductase.